A 246-amino-acid chain; its full sequence is 2-deoxyglucose-6-phosphate phosphatase 2 (246 aa).

Aspartate 83 serves as the catalytic Nucleophile. Position 83 (aspartate 83) interacts with Mg(2+). Residues aspartate 83, glutamate 92, and 146–149 (DVKN) contribute to the substrate site. Aspartate 183 serves as a coordination point for Mg(2+).

Belongs to the HAD-like hydrolase superfamily. DOG/GPP family. Requires Mg(2+) as cofactor.

The enzyme catalyses 2-deoxy-D-glucose 6-phosphate + H2O = 2-deoxy-D-glucose + phosphate. Functionally, phosphatase that is active on 2-deoxy-D-glucose 6-phosphate (2-DOG-6P), but not very active on fructose-1-P. This chain is 2-deoxyglucose-6-phosphate phosphatase 2, found in Saccharomyces cerevisiae (strain ATCC 204508 / S288c) (Baker's yeast).